The sequence spans 218 residues: Adenylate kinase (218 aa).

Residue 10–15 (GAGKGT) participates in ATP binding. The interval 30 to 59 (STGDMIRETIKSGSALGQELKKVLDAGELV) is NMP. Residues threonine 31, arginine 36, 57 to 59 (ELV), and glutamine 92 each bind AMP. Positions 122-159 (GRRIHPASGRTYHTKFNPPKVADKDDVTGEPLITRTDD) are LID. ATP contacts are provided by residues arginine 123 and 132-133 (TY). 2 residues coordinate AMP: arginine 156 and arginine 167. Glutamine 202 serves as a coordination point for ATP.

Belongs to the adenylate kinase family. Monomer.

The protein localises to the cytoplasm. The enzyme catalyses AMP + ATP = 2 ADP. It participates in purine metabolism; AMP biosynthesis via salvage pathway; AMP from ADP: step 1/1. Functionally, catalyzes the reversible transfer of the terminal phosphate group between ATP and AMP. Plays an important role in cellular energy homeostasis and in adenine nucleotide metabolism. The chain is Adenylate kinase from Francisella tularensis subsp. tularensis (strain FSC 198).